A 162-amino-acid chain; its full sequence is Endoribonuclease YbeY (162 aa).

Zn(2+) is bound by residues His117, His121, and His127.

The protein belongs to the endoribonuclease YbeY family. It depends on Zn(2+) as a cofactor.

The protein resides in the cytoplasm. Its function is as follows. Single strand-specific metallo-endoribonuclease involved in late-stage 70S ribosome quality control and in maturation of the 3' terminus of the 16S rRNA. The sequence is that of Endoribonuclease YbeY from Francisella tularensis subsp. holarctica (strain OSU18).